The sequence spans 233 residues: Octanoyltransferase (233 aa).

Residues 38 to 218 enclose the BPL/LPL catalytic domain; that stretch reads AGGPDTLLLL…LVCDALDGVL (181 aa). The span at 57-66 shows a compositional bias: basic and acidic residues; the sequence is RRTEPHERPL. The disordered stretch occupies residues 57–77; the sequence is RRTEPHERPLDGTPVVDTDRG. Residues 76–83, 148–150, and 161–163 contribute to the substrate site; these read RGGKITWH, AIG, and GFA. Cys179 (acyl-thioester intermediate) is an active-site residue.

It belongs to the LipB family.

The protein localises to the cytoplasm. The catalysed reaction is octanoyl-[ACP] + L-lysyl-[protein] = N(6)-octanoyl-L-lysyl-[protein] + holo-[ACP] + H(+). Its pathway is protein modification; protein lipoylation via endogenous pathway; protein N(6)-(lipoyl)lysine from octanoyl-[acyl-carrier-protein]: step 1/2. In terms of biological role, catalyzes the transfer of endogenously produced octanoic acid from octanoyl-acyl-carrier-protein onto the lipoyl domains of lipoate-dependent enzymes. Lipoyl-ACP can also act as a substrate although octanoyl-ACP is likely to be the physiological substrate. The chain is Octanoyltransferase from Mycobacterium avium (strain 104).